Here is an 87-residue protein sequence, read N- to C-terminus: Kappa-4-bungarotoxin (87 aa).

The N-terminal stretch at 1 to 21 is a signal peptide; the sequence is MKTLLLTLVVVTIVCLDLGYT. Disulfide bonds link C24–C42, C35–C63, C48–C52, C67–C79, and C80–C85.

It belongs to the three-finger toxin family. Long-chain subfamily. Kappa-neurotoxin sub-subfamily. In terms of assembly, homo- and heterodimer; non-covalently linked. In terms of tissue distribution, expressed by the venom gland.

Its subcellular location is the secreted. Functionally, postsynaptic neurotoxin that binds and inhibits neuronal nicotinic acetylcholine receptors (nAChR) with high affinity (IC(50)&lt;100 nM). Is a selective, and slowly reversible antagonist of alpha-3/CHRNA3-containing and some alpha-4/CHRNA4-containing AChRs. The chain is Kappa-4-bungarotoxin from Bungarus multicinctus (Many-banded krait).